Here is a 72-residue protein sequence, read N- to C-terminus: Translation initiation factor IF-1 (72 aa).

An S1-like domain is found at 1–72 (MSKQDVIEFD…TKGRITYRGK (72 aa)).

Belongs to the IF-1 family. In terms of assembly, component of the 30S ribosomal translation pre-initiation complex which assembles on the 30S ribosome in the order IF-2 and IF-3, IF-1 and N-formylmethionyl-tRNA(fMet); mRNA recruitment can occur at any time during PIC assembly.

The protein localises to the cytoplasm. Functionally, one of the essential components for the initiation of protein synthesis. Stabilizes the binding of IF-2 and IF-3 on the 30S subunit to which N-formylmethionyl-tRNA(fMet) subsequently binds. Helps modulate mRNA selection, yielding the 30S pre-initiation complex (PIC). Upon addition of the 50S ribosomal subunit IF-1, IF-2 and IF-3 are released leaving the mature 70S translation initiation complex. In Hydrogenovibrio crunogenus (strain DSM 25203 / XCL-2) (Thiomicrospira crunogena), this protein is Translation initiation factor IF-1.